Here is a 651-residue protein sequence, read N- to C-terminus: NADH oxidase (651 aa).

FMN is bound at residue Gln-104. The Proton donor role is filled by Tyr-175. FMN is bound by residues Arg-223 and 320-321 (GR). Positions 344, 347, 351, and 364 each coordinate [4Fe-4S] cluster. Residues Ala-396, Glu-415, Gln-423, Lys-433, and Ala-460 each coordinate FAD.

It in the N-terminal section; belongs to the NADH:flavin oxidoreductase/NADH oxidase family. As to quaternary structure, homohexamer. FMN serves as cofactor. FAD is required as a cofactor. Requires [4Fe-4S] cluster as cofactor. Post-translationally, the N-terminus is blocked.

It carries out the reaction A + NADH + H(+) = AH2 + NAD(+). Reduces a range of alternative electron acceptors. This is NADH oxidase from Thermoanaerobacter brockii (Thermoanaerobium brockii).